A 243-amino-acid chain; its full sequence is Adenosylcobinamide-GDP ribazoletransferase (243 aa).

Transmembrane regions (helical) follow at residues L31–L51, A61–A81, I109–L129, G134–T154, and L188–L208.

It belongs to the CobS family. Mg(2+) is required as a cofactor.

The protein localises to the cell inner membrane. It carries out the reaction alpha-ribazole + adenosylcob(III)inamide-GDP = adenosylcob(III)alamin + GMP + H(+). The catalysed reaction is alpha-ribazole 5'-phosphate + adenosylcob(III)inamide-GDP = adenosylcob(III)alamin 5'-phosphate + GMP + H(+). Its pathway is cofactor biosynthesis; adenosylcobalamin biosynthesis; adenosylcobalamin from cob(II)yrinate a,c-diamide: step 7/7. In terms of biological role, joins adenosylcobinamide-GDP and alpha-ribazole to generate adenosylcobalamin (Ado-cobalamin). Also synthesizes adenosylcobalamin 5'-phosphate from adenosylcobinamide-GDP and alpha-ribazole 5'-phosphate. The polypeptide is Adenosylcobinamide-GDP ribazoletransferase (Ectopseudomonas mendocina (strain ymp) (Pseudomonas mendocina)).